The primary structure comprises 427 residues: Glutamate-1-semialdehyde 2,1-aminomutase (427 aa).

Lys266 bears the N6-(pyridoxal phosphate)lysine mark.

The protein belongs to the class-III pyridoxal-phosphate-dependent aminotransferase family. HemL subfamily. In terms of assembly, homodimer. It depends on pyridoxal 5'-phosphate as a cofactor.

Its subcellular location is the cytoplasm. The enzyme catalyses (S)-4-amino-5-oxopentanoate = 5-aminolevulinate. It functions in the pathway porphyrin-containing compound metabolism; protoporphyrin-IX biosynthesis; 5-aminolevulinate from L-glutamyl-tRNA(Glu): step 2/2. This chain is Glutamate-1-semialdehyde 2,1-aminomutase, found in Aromatoleum aromaticum (strain DSM 19018 / LMG 30748 / EbN1) (Azoarcus sp. (strain EbN1)).